A 436-amino-acid chain; its full sequence is FAD-dependent monooxygenase pigN (436 aa).

3 residues coordinate FAD: E40, G53, and R118. The active site involves R200. The FAD site is built by D316 and A329.

Belongs to the paxM FAD-dependent monooxygenase family. FAD serves as cofactor.

It functions in the pathway secondary metabolite biosynthesis. In terms of biological role, FAD-dependent monooxygenase; part of the gene cluster that mediates the biosynthesis of azaphilone pigments (MonAzPs), a complex mixture of compounds with a common azaphilone skeleton very widely used as food colorants. Within the pathway, pigN hydroxylates the benzaldehyde M7PKS-1 intermediate at C-4 to form the pyran ring. The first step of the pathway is performed by the nrPKS pigA that forms the hexaketide precursor from successive condensations of five malonyl-CoA units, with a simple acetyl-CoA starter unit. The role of esterase pigG is not clear, but it may play at most a supplementary role in the formation of the benzaldehyde produced by the pigA nrPKS. This very reactive benzaldehyde is intercepted by the pigC ketoreductase that to provide the first stable enzyme-free MonAzPs intermediate, 6-(4-hydroxy-2-oxopentyl)-3-methyl-2,4-dioxocyclohexane carbaldehyde, also known as M7PKS-1. The FAD-dependent monooxygenase pigN hydroxylates M7PKS-1 at C-4, which triggers the formation of the pyran ring. PigJ, pigK and pigD are involved in the acetylation of the pyran ring. PigJ and pigK form the two subunits of a dedicated fungal FAS that produces the side chain fatty acyl moiety of MonAzPs and pigD transfers the fatty acyl chain to the C-4 alcohol. PigM and pigO are involved in the elimination of the omega-1 alcohol. PigM acts as an O-acetyltransferase that synthesizes the putative O-11 acetyl intermediate whereas pigO eliminates acetic acid to yield an intermediate with a C10(11) double bond. The dehydration of the C-11 alcohol followed by the reduction of the C6(7) double bond by the NAD(P)H-dependent oxidoreductase pigE increases the electrophilicity of the C-5 ketone of the resulting acyl benzopyran. This in turn sets up the C-5 ketone for an intramolecular Knoevenagel aldol condensation with the C-20 enol of the side chain. This condensation affords the characteristic linear tricyclic carbon skeletons of the yellow pigments that serve as the common precursors for the classical yellow pigments monascin and ankaflavin, orange pigments rubopunctatin and monascorubrin, and red pigments ribropunctamine and monascorubramine. The FAD-dependent oxidoreductase pigF is especially invoved in the biosynthesis of orange and red pigments via desaturation of C6(7). In Monascus ruber (Mold), this protein is FAD-dependent monooxygenase pigN.